Consider the following 323-residue polypeptide: Acetyl-coenzyme A carboxylase carboxyl transferase subunit alpha (323 aa).

A CoA carboxyltransferase C-terminal domain is found at 39 to 293 (RLSKKSQQLT…RRALADSLRQ (255 aa)).

This sequence belongs to the AccA family. As to quaternary structure, acetyl-CoA carboxylase is a heterohexamer composed of biotin carboxyl carrier protein (AccB), biotin carboxylase (AccC) and two subunits each of ACCase subunit alpha (AccA) and ACCase subunit beta (AccD).

It localises to the cytoplasm. It carries out the reaction N(6)-carboxybiotinyl-L-lysyl-[protein] + acetyl-CoA = N(6)-biotinyl-L-lysyl-[protein] + malonyl-CoA. It participates in lipid metabolism; malonyl-CoA biosynthesis; malonyl-CoA from acetyl-CoA: step 1/1. Its function is as follows. Component of the acetyl coenzyme A carboxylase (ACC) complex. First, biotin carboxylase catalyzes the carboxylation of biotin on its carrier protein (BCCP) and then the CO(2) group is transferred by the carboxyltransferase to acetyl-CoA to form malonyl-CoA. The protein is Acetyl-coenzyme A carboxylase carboxyl transferase subunit alpha of Paraburkholderia phytofirmans (strain DSM 17436 / LMG 22146 / PsJN) (Burkholderia phytofirmans).